Here is a 134-residue protein sequence, read N- to C-terminus: S-protein homolog 18 (134 aa).

The N-terminal stretch at 1-25 is a signal peptide; sequence MCPSSFRLILSVILIAFLFVGLCEA. Asn87 carries an N-linked (GlcNAc...) asparagine glycan.

Belongs to the plant self-incompatibility (S1) protein family.

The protein localises to the secreted. This Arabidopsis thaliana (Mouse-ear cress) protein is S-protein homolog 18.